A 218-amino-acid chain; its full sequence is Small ribosomal subunit protein uS5 (218 aa).

The segment at 1–45 (MPGRQRRDGGNGPAGQNSNGPEGRDNRRGGGDRRGGGDRRDNAAE) is disordered. Residues 22–45 (EGRDNRRGGGDRRGGGDRRDNAAE) are compositionally biased toward basic and acidic residues. The 64-residue stretch at 48 to 111 (QLERVVAINR…EEARKGFFRV (64 aa)) folds into the S5 DRBM domain.

It belongs to the universal ribosomal protein uS5 family. In terms of assembly, part of the 30S ribosomal subunit. Contacts proteins S4 and S8.

In terms of biological role, with S4 and S12 plays an important role in translational accuracy. Its function is as follows. Located at the back of the 30S subunit body where it stabilizes the conformation of the head with respect to the body. This chain is Small ribosomal subunit protein uS5, found in Nocardia farcinica (strain IFM 10152).